Here is a 58-residue protein sequence, read N- to C-terminus: Small ribosomal subunit protein bS21A (58 aa).

The disordered stretch occupies residues 38–58 (YEKPSLRRKRKAEAARKGGRN). Over residues 49-58 (AEAARKGGRN) the composition is skewed to basic and acidic residues.

This sequence belongs to the bacterial ribosomal protein bS21 family.

This chain is Small ribosomal subunit protein bS21A, found in Trichormus variabilis (strain ATCC 29413 / PCC 7937) (Anabaena variabilis).